The sequence spans 362 residues: 3-dehydroquinate synthase (362 aa).

NAD(+) contacts are provided by residues 71–76 (DGEKYK), 105–109 (GVIGD), 129–130 (TT), Lys142, Lys151, and 169–172 (CLKT). Residues Glu184, His247, and His264 each contribute to the Zn(2+) site.

The protein belongs to the sugar phosphate cyclases superfamily. Dehydroquinate synthase family. It depends on Co(2+) as a cofactor. Zn(2+) serves as cofactor. The cofactor is NAD(+).

Its subcellular location is the cytoplasm. The enzyme catalyses 7-phospho-2-dehydro-3-deoxy-D-arabino-heptonate = 3-dehydroquinate + phosphate. It participates in metabolic intermediate biosynthesis; chorismate biosynthesis; chorismate from D-erythrose 4-phosphate and phosphoenolpyruvate: step 2/7. Functionally, catalyzes the conversion of 3-deoxy-D-arabino-heptulosonate 7-phosphate (DAHP) to dehydroquinate (DHQ). This chain is 3-dehydroquinate synthase, found in Citrobacter koseri (strain ATCC BAA-895 / CDC 4225-83 / SGSC4696).